We begin with the raw amino-acid sequence, 904 residues long: Protein translocase subunit SecA (904 aa).

ATP contacts are provided by residues Q89, 107–111, and D502; that span reads GEGKT. Residues 872-892 form a disordered region; that stretch reads VESDPTTWGEPSRNDPCPCGS. Zn(2+) is bound by residues C888, C890, C899, and H900.

The protein belongs to the SecA family. As to quaternary structure, part of the essential protein translocation apparatus which comprises SecA, SecYEG and auxiliary proteins SecDF-YajC and YidC. Homodimer. Zn(2+) is required as a cofactor.

It localises to the cell inner membrane. The protein localises to the cytoplasm. The enzyme catalyses ATP + H2O + cellular proteinSide 1 = ADP + phosphate + cellular proteinSide 2.. In terms of biological role, part of the Sec protein translocase complex. Interacts with the SecYEG preprotein conducting channel. Has a central role in coupling the hydrolysis of ATP to the transfer of proteins into and across the cell membrane, serving both as a receptor for the preprotein-SecB complex and as an ATP-driven molecular motor driving the stepwise translocation of polypeptide chains across the membrane. The chain is Protein translocase subunit SecA from Rhodobacter capsulatus (Rhodopseudomonas capsulata).